Here is a 30-residue protein sequence, read N- to C-terminus: Kalata-B17 (30 aa).

Positions 1-30 (GIPCAESCVYIPCTITALLGCKCKDQVCYN) form a cross-link, cyclopeptide (Gly-Asn). Disulfide bonds link cysteine 4/cysteine 21, cysteine 8/cysteine 23, and cysteine 13/cysteine 28.

This is a cyclic peptide.

Functionally, probably participates in a plant defense mechanism. The protein is Kalata-B17 of Oldenlandia affinis.